We begin with the raw amino-acid sequence, 402 residues long: Speedy protein E2B (402 aa).

Residues 1–89 form a disordered region; the sequence is MDRTETRFRK…EEPEKELAPE (89 aa). Over residues 16-39 the composition is skewed to polar residues; it reads GKITTSRQPHPQNEQSPQRSTSGY. Acidic residues predominate over residues 76 to 89; that stretch reads DESEEEPEKELAPE.

This sequence belongs to the Speedy/Ringo family.

The polypeptide is Speedy protein E2B (SPDYE2B) (Homo sapiens (Human)).